The following is a 591-amino-acid chain: Indole-3-acetic acid-amido synthetase GH3.10 (591 aa).

This sequence belongs to the IAA-amido conjugating enzyme family. As to expression, expressed in cotyledons and hypocotyls.

Its function is as follows. Catalyzes the synthesis of indole-3-acetic acid (IAA)-amino acid conjugates, providing a mechanism for the plant to cope with the presence of excess auxin. Involved in red light-specific hypocotyl elongation. May act downstream of a red light signal transduction and determine the degree of hypocotyl elongation. The protein is Indole-3-acetic acid-amido synthetase GH3.10 of Arabidopsis thaliana (Mouse-ear cress).